A 945-amino-acid chain; its full sequence is Isoleucine--tRNA ligase (945 aa).

The 'HIGH' region signature appears at 66 to 76 (PYANGDIHLGH). E581 contributes to the L-isoleucyl-5'-AMP binding site. The 'KMSKS' region motif lies at 622 to 626 (KMSKS). Residue K625 coordinates ATP. The Zn(2+) site is built by C908, C911, C928, and C931.

It belongs to the class-I aminoacyl-tRNA synthetase family. IleS type 1 subfamily. In terms of assembly, monomer. Requires Zn(2+) as cofactor.

It is found in the cytoplasm. It carries out the reaction tRNA(Ile) + L-isoleucine + ATP = L-isoleucyl-tRNA(Ile) + AMP + diphosphate. Functionally, catalyzes the attachment of isoleucine to tRNA(Ile). As IleRS can inadvertently accommodate and process structurally similar amino acids such as valine, to avoid such errors it has two additional distinct tRNA(Ile)-dependent editing activities. One activity is designated as 'pretransfer' editing and involves the hydrolysis of activated Val-AMP. The other activity is designated 'posttransfer' editing and involves deacylation of mischarged Val-tRNA(Ile). This is Isoleucine--tRNA ligase from Paraburkholderia xenovorans (strain LB400).